Here is a 261-residue protein sequence, read N- to C-terminus: tRNA (guanine-N(1)-)-methyltransferase (261 aa).

Residues glycine 113 and 133–138 each bind S-adenosyl-L-methionine; that span reads IGDYVL.

It belongs to the RNA methyltransferase TrmD family. As to quaternary structure, homodimer.

The protein resides in the cytoplasm. The catalysed reaction is guanosine(37) in tRNA + S-adenosyl-L-methionine = N(1)-methylguanosine(37) in tRNA + S-adenosyl-L-homocysteine + H(+). Its function is as follows. Specifically methylates guanosine-37 in various tRNAs. In Xylella fastidiosa (strain M23), this protein is tRNA (guanine-N(1)-)-methyltransferase.